The chain runs to 475 residues: SAM50-like protein SPAC17C9.06 (475 aa).

The region spanning 44–130 (VGISSIRVTG…LDVTIQVKEK (87 aa)) is the POTRA domain.

It belongs to the SAM50/omp85 family. Associates with the mitochondrial contact site and cristae organizing system (MICOS) complex (also known as MINOS or MitOS complex).

The protein resides in the mitochondrion outer membrane. May be required for the assembly pathway of mitochondrial outer membrane proteins. This chain is SAM50-like protein SPAC17C9.06, found in Schizosaccharomyces pombe (strain 972 / ATCC 24843) (Fission yeast).